A 334-amino-acid polypeptide reads, in one-letter code: BRISC and BRCA1-A complex member 1 (334 aa).

At methionine 1 the chain carries N-acetylmethionine. A disordered region spans residues 1–79 (MEVAEANSPT…VPGAVPKPWQ (79 aa)). Position 8 is a phosphoserine (serine 8). Residues 10 to 25 (TEEEEEEEEEEGEEPI) are compositionally biased toward acidic residues. Phosphoserine is present on residues serine 34 and serine 54. Residues 59–68 (EAATADDGAA) show a composition bias toward low complexity. The VWFA-like stretch occupies residues 100 to 303 (VIICLDLSEE…LELHNCVAKL (204 aa)).

It belongs to the BABAM1 family. Component of the ARISC complex, at least composed of UIMC1/RAP80, ABRAXAS1, BRCC3/BRCC36, BABAM2 and BABAM1/NBA1. Component of the BRCA1-A complex, at least composed of BRCA1, BARD1, UIMC1/RAP80, ABRAXAS1, BRCC3/BRCC36, BABAM2 and BABAM1/NBA1. In the BRCA1-A complex, interacts directly with ABRAXAS1 and BABAM2. Component of the BRISC complex, at least composed of ABRAXAS2, BRCC3/BRCC36, BABAM2 and BABAM1/NBA1. Identified in a complex with SHMT2 and the other subunits of the BRISC complex.

The protein localises to the cytoplasm. It localises to the nucleus. In terms of biological role, component of the BRCA1-A complex, a complex that specifically recognizes 'Lys-63'-linked ubiquitinated histones H2A and H2AX at DNA lesions sites, leading to target the BRCA1-BARD1 heterodimer to sites of DNA damage at double-strand breaks (DSBs). The BRCA1-A complex also possesses deubiquitinase activity that specifically removes 'Lys-63'-linked ubiquitin on histones H2A and H2AX. In the BRCA1-A complex, it is required for the complex integrity and its localization at DSBs. Component of the BRISC complex, a multiprotein complex that specifically cleaves 'Lys-63'-linked ubiquitin in various substrates. In these 2 complexes, it is probably required to maintain the stability of BABAM2 and help the 'Lys-63'-linked deubiquitinase activity mediated by BRCC3/BRCC36 component. The BRISC complex is required for normal mitotic spindle assembly and microtubule attachment to kinetochores via its role in deubiquitinating NUMA1. Plays a role in interferon signaling via its role in the deubiquitination of the interferon receptor IFNAR1; deubiquitination increases IFNAR1 activity by enhancing its stability and cell surface expression. Down-regulates the response to bacterial lipopolysaccharide (LPS) via its role in IFNAR1 deubiquitination. The chain is BRISC and BRCA1-A complex member 1 (Babam1) from Rattus norvegicus (Rat).